Reading from the N-terminus, the 401-residue chain is Chromate transport protein (401 aa).

A run of 12 helical transmembrane segments spans residues 26-46 (LVMY…ALAG), 67-87 (GLAL…IYLG), 93-113 (IVGA…MVLA), 124-144 (LTWM…IIAI), 172-192 (VITE…VWFW), 214-234 (AASG…GVFF), 237-257 (AGAF…GGVV), 272-294 (VAVA…YLVA), 299-321 (ACVA…APYF), 330-350 (ILAF…GAVI), 356-376 (SIVD…LLKF), and 379-399 (LSEP…YPLL).

This sequence belongs to the chromate ion transporter (CHR) (TC 2.A.51) family.

Its subcellular location is the cell inner membrane. Functionally, this protein reduces chromate accumulation and is essential for chromate resistance. The polypeptide is Chromate transport protein (Cupriavidus metallidurans (strain ATCC 43123 / DSM 2839 / NBRC 102507 / CH34) (Ralstonia metallidurans)).